An 86-amino-acid polypeptide reads, in one-letter code: Large ribosomal subunit protein bL31 (86 aa).

Positions 64-86 are disordered; sequence KYGMGSANSSESKDQKEEKDSKK. Residues 74–86 show a composition bias toward basic and acidic residues; it reads ESKDQKEEKDSKK.

Belongs to the bacterial ribosomal protein bL31 family. Type A subfamily. In terms of assembly, part of the 50S ribosomal subunit.

In terms of biological role, binds the 23S rRNA. The sequence is that of Large ribosomal subunit protein bL31 from Prochlorococcus marinus (strain MIT 9301).